A 147-amino-acid polypeptide reads, in one-letter code: Deoxyuridine 5'-triphosphate nucleotidohydrolase (147 aa).

Substrate contacts are provided by residues 67 to 69, asparagine 80, and 84 to 86; these read RSG and TID.

The protein belongs to the dUTPase family. It depends on Mg(2+) as a cofactor.

It carries out the reaction dUTP + H2O = dUMP + diphosphate + H(+). The protein operates within pyrimidine metabolism; dUMP biosynthesis; dUMP from dCTP (dUTP route): step 2/2. This enzyme is involved in nucleotide metabolism: it produces dUMP, the immediate precursor of thymidine nucleotides and it decreases the intracellular concentration of dUTP so that uracil cannot be incorporated into DNA. In Anaeromyxobacter dehalogenans (strain 2CP-1 / ATCC BAA-258), this protein is Deoxyuridine 5'-triphosphate nucleotidohydrolase.